A 125-amino-acid chain; its full sequence is UPF0231 protein APP7_1023 (125 aa).

The protein belongs to the UPF0231 family.

The protein is UPF0231 protein APP7_1023 of Actinobacillus pleuropneumoniae serotype 7 (strain AP76).